The chain runs to 311 residues: Cytochrome f (311 aa).

The first 27 residues, 1 to 27, serve as a signal peptide directing secretion; it reads MRRHLSLLIGSLVLGLSLLIAPAASWA. Heme contacts are provided by Y28, C48, C51, and H52. A helical transmembrane segment spans residues 277–297; it reads IYGLLAFFAAVALAQIMLVLK.

This sequence belongs to the cytochrome f family. In terms of assembly, the 4 large subunits of the cytochrome b6-f complex are cytochrome b6, subunit IV (17 kDa polypeptide, PetD), cytochrome f and the Rieske protein, while the 4 small subunits are PetG, PetL, PetM and PetN. The complex functions as a dimer. Heme is required as a cofactor.

The protein localises to the cellular thylakoid membrane. Component of the cytochrome b6-f complex, which mediates electron transfer between photosystem II (PSII) and photosystem I (PSI), cyclic electron flow around PSI, and state transitions. The protein is Cytochrome f of Parasynechococcus marenigrum (strain WH8102).